The sequence spans 210 residues: T-cell surface glycoprotein CD8 beta-2 chain (210 aa).

The signal sequence occupies residues 1 to 18 (MRPRLWLLLAAQLTVLHG). Positions 19–132 (NSVLQQTPAY…ELTFGKGTQL (114 aa)) constitute an Ig-like V-type domain. Over 19–170 (NSVLQQTPAY…ETQKGPLCSP (152 aa)) the chain is Extracellular. A disulfide bridge connects residues cysteine 41 and cysteine 116. The N-linked (GlcNAc...) asparagine glycan is linked to asparagine 102. The chain crosses the membrane as a helical span at residues 171–191 (VTLGLLVAGVLVLLVSLGVAM). The Cytoplasmic segment spans residues 192–210 (HLCCRRRRARLRFMKQFYK).

In general heterodimer of an alpha and a beta chain linked by two disulfide bonds.

It is found in the cell membrane. Its function is as follows. Identifies cytotoxic/suppressor T-cells that interact with MHC class I bearing targets. CD8 is thought to play a role in the process of T-cell mediated killing. The polypeptide is T-cell surface glycoprotein CD8 beta-2 chain (Homo sapiens (Human)).